The chain runs to 334 residues: 3-dehydroquinate synthase (334 aa).

It belongs to the archaeal-type DHQ synthase family.

It carries out the reaction 2-amino-2,3,7-trideoxy-D-lyxo-hept-6-ulosonate + NAD(+) + H2O = 3-dehydroquinate + NH4(+) + NADH + H(+). Its function is as follows. Catalyzes the oxidative deamination and cyclization of 2-amino-3,7-dideoxy-D-threo-hept-6-ulosonic acid (ADH) to yield 3-dehydroquinate (DHQ), which is fed into the canonical shikimic pathway of aromatic amino acid biosynthesis. In Korarchaeum cryptofilum (strain OPF8), this protein is 3-dehydroquinate synthase.